The primary structure comprises 535 residues: Succinate-semialdehyde dehydrogenase, mitochondrial (535 aa).

A mitochondrion-targeting transit peptide spans 1 to 47 (MATCIWLRSCGARRLGWTFPGCRLRPRAGGLVPASGPAPGPAQLRCY). The residue at position 126 (K126) is an N6-acetyllysine; alternate. N6-succinyllysine; alternate is present on K126. An N6-succinyllysine mark is found at K135 and K184. Residues R213 and 228–231 (KPAE) contribute to the NAD(+) site. R213 contributes to the substrate binding site. K265 carries the post-translational modification N6-acetyllysine; alternate. N6-succinyllysine; alternate is present on K265. An NAD(+)-binding site is contributed by 284–289 (GSTTTG). E306 functions as the Proton acceptor in the catalytic mechanism. Position 334 (R334) interacts with substrate. C340 functions as the Nucleophile in the catalytic mechanism. The cysteines at positions 340 and 342 are disulfide-linked. K365 is subject to N6-acetyllysine. Position 402 is an N6-succinyllysine (K402). At K411 the chain carries N6-acetyllysine. S498 serves as a coordination point for substrate. S499 carries the phosphoserine modification.

It belongs to the aldehyde dehydrogenase family. In terms of assembly, homotetramer.

Its subcellular location is the mitochondrion. The catalysed reaction is succinate semialdehyde + NAD(+) + H2O = succinate + NADH + 2 H(+). Its pathway is amino-acid degradation; 4-aminobutanoate degradation. With respect to regulation, redox-regulated. Inhibited under oxydizing conditions. In terms of biological role, catalyzes one step in the degradation of the inhibitory neurotransmitter gamma-aminobutyric acid (GABA). In Pan paniscus (Pygmy chimpanzee), this protein is Succinate-semialdehyde dehydrogenase, mitochondrial (ALDH5A1).